The primary structure comprises 80 residues: Small, acid-soluble spore protein Tlp (80 aa).

It belongs to the Tlp family.

It is found in the spore core. The protein is Small, acid-soluble spore protein Tlp of Bacillus pumilus (strain SAFR-032).